Here is a 155-residue protein sequence, read N- to C-terminus: Small ribosomal subunit protein uS7 (155 aa).

This sequence belongs to the universal ribosomal protein uS7 family. In terms of assembly, part of the 30S ribosomal subunit. Contacts proteins S9 and S11.

In terms of biological role, one of the primary rRNA binding proteins, it binds directly to 16S rRNA where it nucleates assembly of the head domain of the 30S subunit. Is located at the subunit interface close to the decoding center, probably blocks exit of the E-site tRNA. The chain is Small ribosomal subunit protein uS7 from Desulforapulum autotrophicum (strain ATCC 43914 / DSM 3382 / VKM B-1955 / HRM2) (Desulfobacterium autotrophicum).